A 341-amino-acid polypeptide reads, in one-letter code: Basic membrane protein B (341 aa).

The N-terminal stretch at 1–14 (MRIAIFIFGILLTS) is a signal peptide. C15 is lipidated: N-palmitoyl cysteine. A lipid anchor (S-diacylglycerol cysteine) is attached at C15.

This sequence belongs to the BMP lipoprotein family. Monomer.

The protein resides in the cell inner membrane. In terms of biological role, may be part of an ABC-type nucleoside uptake system involved in the purine salvage pathway. This is Basic membrane protein B (bmpB) from Borreliella afzelii (strain PKo) (Borrelia afzelii).